The following is a 438-amino-acid chain: MNLKKTENALSLTLKNFIKSESFGGIFLFLNAVLAMVVANSFLKESYFALWHTPFGFQVGDFFIGFSLHNWIDDVLMALFFLMIGLEIKRELLFGELSSFKKASFPVIAAIGGMIAPGLIYFFLNANTPSQHGFGIPMATDIAFALGVIMLLGKRVPTALKVFLITLAVADDLGAIVVIALFYTTNLKFAWLLGALGVVLVLAILNRLNIRSLIPYLLLGVLLWFCVHQSGIHATIAAVVLAFMIPVKIPKDSKNVELLELGKRYAETSSGVLLTKEQQEILHSIEEKASALQSPLERLEHFLAPISGYFIMPLFAFANAGVSVDSSINLEVDKVLLGVILGLCLGKPLGIFLITFISEKLKITARPKGIGWWHILGAGLLAGIGFTMSMFISNLAFTSEHKDAMEVAKIAILLGSLISGIIGALYLFALDKRAALKK.

Transmembrane regions (helical) follow at residues 23-43 (FGGI…NSFL), 62-82 (FFIG…LFFL), 104-124 (SFPV…YFFL), 133-153 (GFGI…MLLG), 162-182 (VFLI…IALF), 185-205 (TNLK…LAIL), 212-232 (SLIP…QSGI), 302-322 (FLAP…NAGV), 337-357 (LGVI…ITFI), 372-392 (WWHI…SMFI), and 410-430 (IAIL…LFAL).

It belongs to the NhaA Na(+)/H(+) (TC 2.A.33) antiporter family.

It is found in the cell inner membrane. It catalyses the reaction Na(+)(in) + 2 H(+)(out) = Na(+)(out) + 2 H(+)(in). Na(+)/H(+) antiporter that extrudes sodium in exchange for external protons. The protein is Na(+)/H(+) antiporter NhaA of Helicobacter pylori (strain J99 / ATCC 700824) (Campylobacter pylori J99).